The primary structure comprises 256 residues: Chorismate mutase (256 aa).

The Chorismate mutase domain maps to 3-255; sequence FTKPETVLNL…EVEYLLRRLE (253 aa). Residues R75 and R76 each coordinate L-tyrosine. L-tryptophan-binding residues include N138, N139, G141, and S142. N139, G141, S142, and T145 together coordinate L-tyrosine.

In terms of assembly, homodimer.

The protein resides in the cytoplasm. The catalysed reaction is chorismate = prephenate. It functions in the pathway metabolic intermediate biosynthesis; prephenate biosynthesis; prephenate from chorismate: step 1/1. Each dimer has two allosteric binding sites that can bind the regulatory effectors tryptophan or tyrosine. Can bind either one tryptophan or one tyrosine, two tryptophan or two tyrosine or one tryptophan and one tyrosine, which differentially affect the catalytic activity. Activated by tryptophan and subject to feedback inhibition by tyrosine. In the presence of both tryptophan and tyrosine, the enzyme is in the activated state. Functionally, catalyzes the Claisen rearrangement of chorismate to prephenate. Acts at the first branch point in the aromatic amino acid pathway where it steers biosynthesis towards phenylalanine and tyrosine, and away from tryptophan. The polypeptide is Chorismate mutase (Saccharomyces cerevisiae (strain ATCC 204508 / S288c) (Baker's yeast)).